The primary structure comprises 1043 residues: MPKDSSLQSILLIGSGRSSSAKAAEFDYSGTQACIAFKEEGYRVILVNNNPATIMTDDVHADAVYFEPLTVEAVEAIIAKETPDGLLATFGGQTGLNLAFQLHEAGVLKKYGVRLLGTPIEAIKRPRGGPRTFRALMHELGEPVPESEIVTSVEEAVAFAEQIGFPIIIRPAYTLGGTGGGIAENMEQFLALVEKGLNESPIHQCLIERSVAGFKEIEYEVMRDQSNTCITVCNMENVDPVGIHTGDSIVVAPSQTLTDEEYQMLRSSAVKIISALGIIGGCNIQFALDPNSKQYYLIEVNPRVSRSSALASKATGYPIAALPAKLAVGYTLAELVNPVTKTTYASFEPALDYVVVKFPRLPFDKFPHADRKLGTQMKATGEVMAIDRNMERAFQKAVQSLEGKNNGLLLPELSVKTNDELKQLLVDKDDRRFFAILELLRRGVAVEAIHKWTKIDRFFLCSFERLVALEKQAAAATLDTIEEQTFRFLKEKGCSDAFLAETWGVTELDVRNKRKELGIVPSYKMVDTCAAEFHSETDYYYSTYFGEDERKQPSGKEKVLIIGAGPIRIGQGIEFDYSSVHSVFALQKEGYETVMINNNPETVSTDFAVADRLYFEPLTLESVLDVIEAEQIKHVIVQFGGQTAINLVKGLEEAGVPLLGVTYDMIDQLEDRDRFYQLLEELDIPHVPGLVANNAEELAAKAAEIGYPVLLRPSYVIGGCGMFIVHSEAQLAALIEQGELTYPILIDAYLDGKEAEADIVTDGTDIVLPVIIEHVEKAGVHSGDSYAWLPAQTLTGEEKAKIIDYAGRIAKKLGFKGIMNIQYVIADGNVYVLEVNPRASRTVPIVSKTTGVPLAQIATKLLLGKSLVDIVDEKARGLAVMPYAVLKYPVFSTHKLPGVDPMVGPEMKSTGEGISIAATKEEAAYKAFYPYLQKKANANEVYVIGNIDAELEAEMTAKQLTIVADVPFSDWVKRDTALAVIDLGKEEGEANKRMTALSRQLLVFTERETLKLFLQALDVDHLDVQPIHGWLEKKKQAEQAVIA.

The carboxyphosphate synthetic domain stretch occupies residues 1-402 (MPKDSSLQSI…AFQKAVQSLE (402 aa)). One can recognise an ATP-grasp 1 domain in the interval 134–328 (RALMHELGEP…IAALPAKLAV (195 aa)). Residues R170, G176, G177, R209, V211, E216, G242, I243, H244, Q285, and E299 each coordinate ATP. 3 residues coordinate Mg(2+): Q285, E299, and N301. The Mn(2+) site is built by Q285, E299, and N301. Oligomerization domain stretches follow at residues 403–549 (GKNN…GEDE) and 403–550 (GKNN…EDER). Carbamoyl phosphate synthetic domain regions lie at residues 550 to 932 (RKQP…YPYL) and 551 to 932 (KQPS…YPYL). Residues 676–863 (YQLLEELDIP…LAQIATKLLL (188 aa)) form the ATP-grasp 2 domain. ATP is bound by residues R712, A748, L750, E754, G779, V780, H781, S782, Q822, and E834. Mg(2+) is bound by residues Q822, E834, and N836. Mn(2+) contacts are provided by Q822, E834, and N836. Residues 930 to 1037 (PYLQKKANAN…HGWLEKKKQA (108 aa)) enclose the MGS-like domain. The interval 933 to 1043 (QKKANANEVY…KKQAEQAVIA (111 aa)) is allosteric domain.

This sequence belongs to the CarB family. As to quaternary structure, composed of two chains; the small (or glutamine) chain promotes the hydrolysis of glutamine to ammonia, which is used by the large (or ammonia) chain to synthesize carbamoyl phosphate. Tetramer of heterodimers (alpha,beta)4. Requires Mg(2+) as cofactor. It depends on Mn(2+) as a cofactor.

It catalyses the reaction hydrogencarbonate + L-glutamine + 2 ATP + H2O = carbamoyl phosphate + L-glutamate + 2 ADP + phosphate + 2 H(+). The catalysed reaction is hydrogencarbonate + NH4(+) + 2 ATP = carbamoyl phosphate + 2 ADP + phosphate + 2 H(+). It functions in the pathway amino-acid biosynthesis; L-arginine biosynthesis; carbamoyl phosphate from bicarbonate: step 1/1. Functionally, large subunit of the glutamine-dependent carbamoyl phosphate synthetase (CPSase). CPSase catalyzes the formation of carbamoyl phosphate from the ammonia moiety of glutamine, carbonate, and phosphate donated by ATP, constituting the first step of the biosynthetic pathway leading to arginine and/or urea. The large subunit (synthetase) binds the substrates ammonia (free or transferred from glutamine from the small subunit), hydrogencarbonate and ATP and carries out an ATP-coupled ligase reaction, activating hydrogencarbonate by forming carboxy phosphate which reacts with ammonia to form carbamoyl phosphate. This chain is Carbamoyl phosphate synthase arginine-specific large chain (carB), found in Geobacillus stearothermophilus (Bacillus stearothermophilus).